The sequence spans 89 residues: DNA-binding protein HU (89 aa).

This sequence belongs to the bacterial histone-like protein family. As to quaternary structure, homodimer. The dimer interacts with the DNA mimic protein DMP12. It also interacts with the monomeric form of the DNA mimic protein DMP19 with 1:1 stoichiometry.

With respect to regulation, activity is regulated by the DNA mimic protein DMP12. Activity is inhibited in the presence of the DNA mimic protein DMP19, which interacts with HU and prevents the binding of HU to DNA. In terms of biological role, histone-like DNA-binding protein which is capable of wrapping DNA to stabilize it, and thus to prevent its denaturation under extreme environmental conditions. This is DNA-binding protein HU from Neisseria meningitidis serogroup B (strain ATCC BAA-335 / MC58).